Here is an 89-residue protein sequence, read N- to C-terminus: Large ribosomal subunit protein eL31 (89 aa).

It belongs to the eukaryotic ribosomal protein eL31 family.

The polypeptide is Large ribosomal subunit protein eL31 (Picrophilus torridus (strain ATCC 700027 / DSM 9790 / JCM 10055 / NBRC 100828 / KAW 2/3)).